A 379-amino-acid polypeptide reads, in one-letter code: Succinate--CoA ligase [ADP-forming] subunit beta (379 aa).

The ATP-grasp domain occupies 9–236; that stretch reads KEIARKYGIE…GRDATPYEKV (228 aa). ATP contacts are provided by residues lysine 46, 53 to 55, glutamate 92, valine 95, and glutamate 100; that span reads GRG. Residues asparagine 192 and aspartate 206 each coordinate Mg(2+). Substrate-binding positions include asparagine 256 and 313–315; that span reads GIT.

Belongs to the succinate/malate CoA ligase beta subunit family. Heterotetramer of two alpha and two beta subunits. Mg(2+) serves as cofactor.

The enzyme catalyses succinate + ATP + CoA = succinyl-CoA + ADP + phosphate. It catalyses the reaction GTP + succinate + CoA = succinyl-CoA + GDP + phosphate. Its pathway is carbohydrate metabolism; tricarboxylic acid cycle; succinate from succinyl-CoA (ligase route): step 1/1. Succinyl-CoA synthetase functions in the citric acid cycle (TCA), coupling the hydrolysis of succinyl-CoA to the synthesis of either ATP or GTP and thus represents the only step of substrate-level phosphorylation in the TCA. The beta subunit provides nucleotide specificity of the enzyme and binds the substrate succinate, while the binding sites for coenzyme A and phosphate are found in the alpha subunit. This chain is Succinate--CoA ligase [ADP-forming] subunit beta, found in Desulfurococcus amylolyticus (strain DSM 18924 / JCM 16383 / VKM B-2413 / 1221n) (Desulfurococcus kamchatkensis).